Here is a 363-residue protein sequence, read N- to C-terminus: Lovastatin nonaketide synthase, enoyl reductase component lovC (363 aa).

NADP(+) contacts are provided by residues 51 to 54 (SDTK), 174 to 177 (STAT), 197 to 200 (SPHN), Tyr-215, 262 to 263 (LN), Thr-280, and 351 to 352 (LS). The segment at 226-272 (TYTKNNLRYALDCITNVESTTFCFAAIGRAGGHYVSLNPFPEHAATR) is lovB-binding.

The protein belongs to the zinc-containing alcohol dehydrogenase family. In terms of assembly, each MAT domain from the lovB homodimer binds one lovC molecule to form the final active lovB-lovC megasynthase complex.

It carries out the reaction holo-[lovastatin nonaketide synthase] + 9 malonyl-CoA + S-adenosyl-L-methionine + 11 NADPH + 19 H(+) = dihydromonacolin L-[lovastatin nonaketide synthase] + S-adenosyl-L-homocysteine + 9 CO2 + 11 NADP(+) + 9 CoA + 6 H2O. The protein operates within polyketide biosynthesis; lovastatin biosynthesis. Functionally, trans-enoyl reductase; part of the gene cluster that mediates the biosynthesis of lovastatin (also known as mevinolin, mevacor or monacolin K), a hypolipidemic inhibitor of (3S)-hydroxymethylglutaryl-coenzyme A (HMG-CoA) reductase (HMGR). The first step in the biosynthesis of lovastatin is the production of dihydromonacolin L acid (DML) by the lovastatin nonaketide synthase lovB and the trans-acting enoyl reductase lovC (called the lovB-lovC megasynthase complex) via condensation of one acetyl-CoA unit and 8 malonyl-CoA units. The formation of the LovB/C complex is essential for the integrity of the catalytic chamber to the complete total synthesis of DML acid. Dihydromonacolin L acid is released from lovB by the thioesterase lovG. Next, dihydromonacolin L acid is oxidized by the dihydromonacolin L monooxygenase lovA twice to form monacolin J acid. The 2-methylbutyrate moiety of lovastatin is synthesized by the lovastatin diketide synthase lovF via condensation of one acetyl-CoA unit and one malonyl-CoA unit. Finally, the covalent attachment of this moiety to monacolin J acid is catalyzed by the transesterase lovD to yield lovastatin. LovD has broad substrate specificity and can also convert monacolin J to simvastatin using alpha-dimethylbutanoyl-S-methyl-3-mercaptopropionate (DMB-S-MMP) as the thioester acyl donor, and can also catalyze the reverse reaction and function as hydrolase in vitro. LovD has much higher activity with LovF-bound 2-methylbutanoate than with free diketide substrates. The polypeptide is Lovastatin nonaketide synthase, enoyl reductase component lovC (Aspergillus terreus).